The chain runs to 230 residues: tRNA pseudouridine synthase B (230 aa).

The active-site Nucleophile is D45.

Belongs to the pseudouridine synthase TruB family. Type 1 subfamily.

It catalyses the reaction uridine(55) in tRNA = pseudouridine(55) in tRNA. Functionally, responsible for synthesis of pseudouridine from uracil-55 in the psi GC loop of transfer RNAs. The sequence is that of tRNA pseudouridine synthase B from Endomicrobium trichonymphae.